We begin with the raw amino-acid sequence, 375 residues long: Naringenin 7-O-methyltransferase (375 aa).

136 to 142 (LNLDKVF) is a binding site for substrate. The interval 168–188 (LFQYLGQDGNEPSNTLFNQAM) is substrate binding. S-adenosyl-L-methionine-binding residues include G219, D242, M263, and K276. Catalysis depends on H280, which acts as the Proton acceptor.

The protein belongs to the class I-like SAM-binding methyltransferase superfamily. Cation-independent O-methyltransferase family. COMT subfamily.

The enzyme catalyses (2S)-naringenin + S-adenosyl-L-methionine = (2S)-sakuranetin + S-adenosyl-L-homocysteine + H(+). Functionally, S-adenosyl-L-methionine-dependent methyltransferase involved in the biosynthesis of the sakuranetin, an inducible defense mechanism of O.sativa against pathogen attack. The polypeptide is Naringenin 7-O-methyltransferase (Oryza sativa subsp. japonica (Rice)).